Consider the following 503-residue polypeptide: Sugar phosphate exchanger 3 (503 aa).

A helical transmembrane segment spans residues 20–40; it reads YTHHHLAAFLLTFFSYSLLHA. N-linked (GlcNAc...) asparagine glycans are attached at residues Asn-62 and Asn-71. A run of 5 helical transmembrane segments spans residues 87–107, 119–139, 152–172, 183–203, and 214–234; these read TLFL…GLFI, LVLT…GTLT, LVWI…VAIM, FVFG…AFLA, and AFLV…FGLV. A glycan (N-linked (GlcNAc...) asparagine) is linked at Asn-275. 6 helical membrane passes run 300-322, 342-362, 367-387, 395-415, 437-457, and 466-486; these read GVLL…FFWL, IWYD…SDLM, PVLT…SHSP, FIMS…SSAI, GIVD…VPLI, and VFYF…PLIV.

Belongs to the major facilitator superfamily. Organophosphate:Pi antiporter (OPA) (TC 2.A.1.4) family.

It localises to the endoplasmic reticulum membrane. The protein localises to the lysosome membrane. Unlike the other SLC37 members, seems to lack glucose-6-phosphate antiporter activity. The sequence is that of Sugar phosphate exchanger 3 (slc37a3) from Xenopus laevis (African clawed frog).